The chain runs to 302 residues: MALQAQQQATPSPTRDRAGSGEWLADTEKLPGAAASPEDVVVASTHHAAAAARYVPPRATSHTAEPNPGRGGGGGWYSWNGGRRARHDPPAPRRQQPAKTPPPAPPLPAAPPPPPAASPAPAPRAPPPHAQVRSADRVVPAILSRKRRAAVMQRAALLARAAAAGLCLAALAVLASDTRRGWARDSYSNYAQFRYSEAVNVVGFLYSVFQFVALAELMRRNKHLIPHPKRDLFDFTMDQVVAYLLISSSSSATARASDLIENWGSDSFPSMANGSIAISFVAFVVFAICSLISAYNLFRRDM.

The segment covering 1 to 13 has biased composition (polar residues); that stretch reads MALQAQQQATPSP. Positions 1-134 are disordered; sequence MALQAQQQAT…APPPHAQVRS (134 aa). Over 1–154 the chain is Cytoplasmic; sequence MALQAQQQAT…RKRRAAVMQR (154 aa). Over residues 40 to 60 the composition is skewed to low complexity; the sequence is VVVASTHHAAAAARYVPPRAT. Residues 99–129 show a composition bias toward pro residues; the sequence is KTPPPAPPLPAAPPPPPAASPAPAPRAPPPH. Residues 155 to 175 form a helical membrane-spanning segment; sequence AALLARAAAAGLCLAALAVLA. Over 176–197 the chain is Extracellular; the sequence is SDTRRGWARDSYSNYAQFRYSE. A helical transmembrane segment spans residues 198 to 218; sequence AVNVVGFLYSVFQFVALAELM. Over 219-238 the chain is Cytoplasmic; sequence RRNKHLIPHPKRDLFDFTMD. Residues 239–256 form a helical membrane-spanning segment; the sequence is QVVAYLLISSSSSATARA. The Extracellular portion of the chain corresponds to 257 to 273; it reads SDLIENWGSDSFPSMAN. The helical transmembrane segment at 274-294 threads the bilayer; that stretch reads GSIAISFVAFVVFAICSLISA. The Cytoplasmic portion of the chain corresponds to 295–302; it reads YNLFRRDM.

It belongs to the Casparian strip membrane proteins (CASP) family. In terms of assembly, homodimer and heterodimers.

The protein resides in the cell membrane. The polypeptide is CASP-like protein 4A2 (Zea mays (Maize)).